A 322-amino-acid chain; its full sequence is Phosphatidylserine decarboxylase proenzyme (322 aa).

Catalysis depends on charge relay system; for autoendoproteolytic cleavage activity residues Asp-90, His-147, and Ser-254. Catalysis depends on Ser-254, which acts as the Schiff-base intermediate with substrate; via pyruvic acid; for decarboxylase activity. Ser-254 is modified (pyruvic acid (Ser); by autocatalysis). Residues 293–322 (PDAEPAPLPAEEIEAEHDASPLVDDKKDQV) form a disordered region. The span at 308-322 (EHDASPLVDDKKDQV) shows a compositional bias: basic and acidic residues.

The protein belongs to the phosphatidylserine decarboxylase family. PSD-B subfamily. Prokaryotic type I sub-subfamily. As to quaternary structure, heterodimer of a large membrane-associated beta subunit and a small pyruvoyl-containing alpha subunit. It depends on pyruvate as a cofactor. In terms of processing, is synthesized initially as an inactive proenzyme. Formation of the active enzyme involves a self-maturation process in which the active site pyruvoyl group is generated from an internal serine residue via an autocatalytic post-translational modification. Two non-identical subunits are generated from the proenzyme in this reaction, and the pyruvate is formed at the N-terminus of the alpha chain, which is derived from the carboxyl end of the proenzyme. The autoendoproteolytic cleavage occurs by a canonical serine protease mechanism, in which the side chain hydroxyl group of the serine supplies its oxygen atom to form the C-terminus of the beta chain, while the remainder of the serine residue undergoes an oxidative deamination to produce ammonia and the pyruvoyl prosthetic group on the alpha chain. During this reaction, the Ser that is part of the protease active site of the proenzyme becomes the pyruvoyl prosthetic group, which constitutes an essential element of the active site of the mature decarboxylase.

The protein resides in the cell membrane. The enzyme catalyses a 1,2-diacyl-sn-glycero-3-phospho-L-serine + H(+) = a 1,2-diacyl-sn-glycero-3-phosphoethanolamine + CO2. It participates in phospholipid metabolism; phosphatidylethanolamine biosynthesis; phosphatidylethanolamine from CDP-diacylglycerol: step 2/2. Its function is as follows. Catalyzes the formation of phosphatidylethanolamine (PtdEtn) from phosphatidylserine (PtdSer). The sequence is that of Phosphatidylserine decarboxylase proenzyme from Escherichia coli O139:H28 (strain E24377A / ETEC).